The sequence spans 418 residues: Serine hydroxymethyltransferase (418 aa).

(6S)-5,6,7,8-tetrahydrofolate-binding positions include Leu-121 and 125–127; that span reads GHL. N6-(pyridoxal phosphate)lysine is present on Lys-230. 355–357 lines the (6S)-5,6,7,8-tetrahydrofolate pocket; sequence SPF.

The protein belongs to the SHMT family. In terms of assembly, homodimer. The cofactor is pyridoxal 5'-phosphate.

Its subcellular location is the cytoplasm. The enzyme catalyses (6R)-5,10-methylene-5,6,7,8-tetrahydrofolate + glycine + H2O = (6S)-5,6,7,8-tetrahydrofolate + L-serine. The protein operates within one-carbon metabolism; tetrahydrofolate interconversion. It functions in the pathway amino-acid biosynthesis; glycine biosynthesis; glycine from L-serine: step 1/1. Catalyzes the reversible interconversion of serine and glycine with tetrahydrofolate (THF) serving as the one-carbon carrier. This reaction serves as the major source of one-carbon groups required for the biosynthesis of purines, thymidylate, methionine, and other important biomolecules. Also exhibits THF-independent aldolase activity toward beta-hydroxyamino acids, producing glycine and aldehydes, via a retro-aldol mechanism. This chain is Serine hydroxymethyltransferase, found in Streptococcus pyogenes serotype M18 (strain MGAS8232).